A 266-amino-acid polypeptide reads, in one-letter code: Indole-3-glycerol phosphate synthase (266 aa).

Belongs to the TrpC family.

It catalyses the reaction 1-(2-carboxyphenylamino)-1-deoxy-D-ribulose 5-phosphate + H(+) = (1S,2R)-1-C-(indol-3-yl)glycerol 3-phosphate + CO2 + H2O. Its pathway is amino-acid biosynthesis; L-tryptophan biosynthesis; L-tryptophan from chorismate: step 4/5. This chain is Indole-3-glycerol phosphate synthase, found in Acidovorax sp. (strain JS42).